The following is a 359-amino-acid chain: Medium-wave-sensitive opsin 1 (359 aa).

The Extracellular portion of the chain corresponds to 1–47; the sequence is MAQRLTGEQTLDHYEDSTHASIFTYTNSNSTKGPFEGPNYHIAPRWV. The interval 12–38 is required for 11-cis-retinal regeneration; it reads DHYEDSTHASIFTYTNSNSTKGPFEGP. N-linked (GlcNAc...) asparagine glycosylation occurs at Asn-29. Residues 48-72 form a helical membrane-spanning segment; that stretch reads YHLTSTWMILVVVASVFTNGLVLAA. At 73 to 84 the chain is on the cytoplasmic side; it reads TMRFKKLRHPLN. Residues 85-110 form a helical membrane-spanning segment; sequence WILVNLAVADLAETIIASTISVVNQI. The Extracellular segment spans residues 111–124; that stretch reads YGYFVLGHPLCVIE. Cys-121 and Cys-198 form a disulfide bridge. Residues 125-144 form a helical membrane-spanning segment; it reads GYIVSLCGITGLWSLAIISW. Residues 145–163 are Cytoplasmic-facing; sequence ERWLVVCKPFGNVRFDAKL. A helical transmembrane segment spans residues 164-187; it reads ATVGIVFSWVWAAIWTAPPIFGWS. The Extracellular segment spans residues 188–213; it reads RYWPYGLKTSCGPDVFSGTSYPGVQS. A helical transmembrane segment spans residues 214–241; that stretch reads YMMVLMVTCCIFPLSIIVLCYLQVWLAI. Topologically, residues 242 to 263 are cytoplasmic; that stretch reads RAVAKQQKESESTQKAEKEVTR. Residues 264 to 287 form a helical membrane-spanning segment; the sequence is MVVVMVFAYCLCWGPYTFFACFAT. At 288 to 295 the chain is on the extracellular side; sequence AHPGYAFH. Residues 296–320 form a helical membrane-spanning segment; that stretch reads PLVASLPSYFAKSATIYNPIIYVFM. Lys-307 carries the post-translational modification N6-(retinylidene)lysine. Topologically, residues 321–359 are cytoplasmic; it reads NRQFRNCILHLFGKKVDDSSELSSTSKTEVSSVSSVSPA.

The protein belongs to the G-protein coupled receptor 1 family. Opsin subfamily. Monomer. Homodimer. Homotetramer. In terms of processing, N-glycosylated. O-glycosylated. Phosphorylated on some or all of the serine and threonine residues present in the C-terminal region. In terms of tissue distribution, expressed in retina (at protein level). Expressed in cone photoreceptor cells (at protein level).

Its subcellular location is the cell membrane. Functionally, visual pigments are the light-absorbing molecules that mediate vision. They consist of an apoprotein, opsin, covalently linked to cis-retinal. May increase spectral sensitivity in dim light. The sequence is that of Medium-wave-sensitive opsin 1 (Opn1mw) from Mus musculus (Mouse).